The sequence spans 321 residues: Glucokinase (321 aa).

8 to 13 contacts ATP; the sequence is GDVGGT.

Belongs to the bacterial glucokinase family.

The protein localises to the cytoplasm. The catalysed reaction is D-glucose + ATP = D-glucose 6-phosphate + ADP + H(+). This is Glucokinase from Psychromonas ingrahamii (strain DSM 17664 / CCUG 51855 / 37).